The sequence spans 125 residues: Period circadian protein (125 aa).

The disordered stretch occupies residues 1–125 (EGSGGSGSSG…VTLTESLLNK (125 aa)). 3 consecutive repeat copies span residues 30 to 31 (GT), 33 to 34 (GT), and 35 to 36 (GT). Positions 30–84 (GTGGTGTNTGTNTGTGTGTGTGTGTGTGTGTGTGTGTGTGTGTGTGTGKGAGAGT) are enriched in gly residues. Residues 30–86 (GTGGTGTNTGTNTGTGTGTGTGTGTGTGTGTGTGTGTGTGTGTGTGTGKGAGAGTGT) form a 28 X 2 AA approximate tandem repeats of G-[TA] region. Residues 37–38 (NT) form a 4; approximate repeat. Residues 39–40 (GT) form repeat 5. One copy of the 6; approximate repeat lies at 41 to 42 (NT). A run of 17 repeats spans residues 43-44 (GT), 45-46 (GT), 47-48 (GT), 49-50 (GT), 51-52 (GT), 53-54 (GT), 55-56 (GT), 57-58 (GT), 59-60 (GT), 61-62 (GT), 63-64 (GT), 65-66 (GT), 67-68 (GT), 69-70 (GT), 71-72 (GT), 73-74 (GT), and 75-76 (GT). The 24; approximate repeat unit spans residues 77–78 (GK). A run of 4 repeats spans residues 79–80 (GA), 81–82 (GA), 83–84 (GT), and 85–86 (GT). The span at 85–112 (GTATNETAGPGTTTTTTTRSTTTAATAA) shows a compositional bias: low complexity. The span at 116 to 125 (VTLTESLLNK) shows a compositional bias: polar residues.

In terms of assembly, forms a heterodimer with timeless (TIM); the complex then translocates into the nucleus. Phosphorylated with a circadian rhythmicity, probably by the double-time protein (dbt). Phosphorylation could be implicated in the stability of per monomer and in the formation of heterodimer per-tim.

The protein localises to the nucleus. It localises to the cytoplasm. Its subcellular location is the perinuclear region. Its function is as follows. Essential for biological clock functions. Determines the period length of circadian and ultradian rhythms; an increase in PER dosage leads to shortened circadian rhythms and a decrease leads to lengthened circadian rhythms. Essential for the circadian rhythmicity of locomotor activity, eclosion behavior, and for the rhythmic component of the male courtship song that originates in the thoracic nervous system. The biological cycle depends on the rhythmic formation and nuclear localization of the TIM-PER complex. Light induces the degradation of TIM, which promotes elimination of PER. Nuclear activity of the heterodimer coordinatively regulates PER and TIM transcription through a negative feedback loop. Behaves as a negative element in circadian transcriptional loop. Does not appear to bind DNA, suggesting indirect transcriptional inhibition. The sequence is that of Period circadian protein (per) from Drosophila ananassae (Fruit fly).